We begin with the raw amino-acid sequence, 1026 residues long: Multidrug resistance protein MdtC (1026 aa).

11 helical membrane passes run 15–35, 333–353, 360–380, 387–407, 431–451, 463–483, 528–548, 853–873, 897–917, 953–973, and 984–1004; these read ILIA…LPVA, EVEE…FLFL, LIPA…MYLC, LSLM…IVVL, VGFT…PLLL, FAVT…TLTP, LVGV…IAIP, LILI…LYES, LFNA…IGIV, PIMM…LSGG, and ITIV…TPVV.

The protein belongs to the resistance-nodulation-cell division (RND) (TC 2.A.6) family. MdtC subfamily. Part of a tripartite efflux system composed of MdtA, MdtB and MdtC. MdtC forms a heteromultimer with MdtB.

Its subcellular location is the cell inner membrane. This Salmonella schwarzengrund (strain CVM19633) protein is Multidrug resistance protein MdtC.